We begin with the raw amino-acid sequence, 572 residues long: MVKTALTAPEGPPSDVEEIKEKSDYLRGTLKEVMLDPISAGIPDDDNRLMKHHGSYLQDDRDLRNERQKQKLEPAYQFMLRVRLPGGIATSKQWLVMDELAHKYGNGTLKLTTRETFQLHGILKWNMKKTIQDIHSTMLDTIAACGDVNRNVMCTSNPYQSEVHHDVYELAKKLSDDLLPQTRAYHEIWLDEEKVAATPDTEVEPMYGPLYLPRKFKIGVAVPPANDIDVFSQDLGFIAIIENEQLIGFNVAIGGGMGMTHGDTATYPQLAKVIGFCTPEQVVEIAKQVITIQRDYGNRSVRKNARFKYTVDRLGLENVKEELEGRLGFALLEARDYHFDHNGDRYGWVKGINGRWHYTMFVEGGRIIDYDDYPLMTGIREIAKIHSGDFRLTANQNLIIGNVTSHKKKQIEQLIQEFGLSDGQQHSALRRSSMACVALPTCGLAMAEAERYLPRLIDKIEEIVEENGLSDKEITIRMTGCPNGCARHALGEIGFIGKSPGKYNMYLGAAFDGSRLSKLYRENVGEEEILNELGSLLPRYAKEREEKEHFGDFVVRAGIVKETTDGTNFHVQ.

The [4Fe-4S] cluster site is built by cysteine 436, cysteine 442, cysteine 481, and cysteine 485. Cysteine 485 is a binding site for siroheme.

Belongs to the nitrite and sulfite reductase 4Fe-4S domain family. As to quaternary structure, alpha(8)-beta(8). The alpha component is a flavoprotein, the beta component is a hemoprotein. Requires siroheme as cofactor. [4Fe-4S] cluster is required as a cofactor.

The catalysed reaction is hydrogen sulfide + 3 NADP(+) + 3 H2O = sulfite + 3 NADPH + 4 H(+). Its pathway is sulfur metabolism; hydrogen sulfide biosynthesis; hydrogen sulfide from sulfite (NADPH route): step 1/1. In terms of biological role, component of the sulfite reductase complex that catalyzes the 6-electron reduction of sulfite to sulfide. This is one of several activities required for the biosynthesis of L-cysteine from sulfate. The polypeptide is Sulfite reductase [NADPH] hemoprotein beta-component (Bacillus pumilus (strain SAFR-032)).